A 132-amino-acid chain; its full sequence is Small ribosomal subunit protein uS8 (132 aa).

It belongs to the universal ribosomal protein uS8 family. As to quaternary structure, part of the 30S ribosomal subunit. Contacts proteins S5 and S12.

Its function is as follows. One of the primary rRNA binding proteins, it binds directly to 16S rRNA central domain where it helps coordinate assembly of the platform of the 30S subunit. In Geobacillus thermodenitrificans (strain NG80-2), this protein is Small ribosomal subunit protein uS8.